A 560-amino-acid chain; its full sequence is uncharacterized protein (560 aa).

A DNA-binding region (zn(2)-C6 fungal-type) is located at residues Cys-18–Cys-44. The tract at residues Leu-60–Leu-80 is disordered. A compositionally biased stretch (basic and acidic residues) spans Ile-64–Leu-80. Residues Phe-182–Phe-202 traverse the membrane as a helical segment.

The protein resides in the nucleus membrane. This is an uncharacterized protein from Schizosaccharomyces pombe (strain 972 / ATCC 24843) (Fission yeast).